The following is a 426-amino-acid chain: Interferon regulatory factor 8 (426 aa).

A DNA-binding region (IRF tryptophan pentad repeat) is located at residues 7–114; the sequence is GRRLRQWLIE…EPYKVYRIVP (108 aa).

It belongs to the IRF family. Interacts (via C-terminus) with TRIM21 (via C-terminus). Interacts with the BATF-JUNB heterodimer. Interacts with BATF (via bZIP domain); the interaction is direct. Interacts with COPS2. Interacts with SPI1. Post-translationally, ubiquitinated. Ubiquitination by TRIM21 in macrophages, a process that is strongly increased upon interferon gamma stimulation, leds to the enhanced transcriptional activity of target cytokine genes. Ubiquitination leads to its degradation by the proteasome. Sumoylated with SUMO3. Desumoylated by SENP1. As to expression, predominantly expressed in lymphoid tissues.

The protein localises to the nucleus. It is found in the cytoplasm. Functionally, transcription factor that specifically binds to the upstream regulatory region of type I interferon (IFN) and IFN-inducible MHC class I genes (the interferon consensus sequence (ICS)). Can both act as a transcriptional activator or repressor. Plays a negative regulatory role in cells of the immune system. Involved in CD8(+) dendritic cell differentiation by forming a complex with the BATF-JUNB heterodimer in immune cells, leading to recognition of AICE sequence (5'-TGAnTCA/GAAA-3'), an immune-specific regulatory element, followed by cooperative binding of BATF and IRF8 and activation of genes. Required for the development of plasmacytoid dendritic cells (pDCs), which produce most of the type I IFN in response to viral infection. Positively regulates macroautophagy in dendritic cells. Acts as a transcriptional repressor of osteoclast differentiation factors such as NFATC1 and EEIG1. The protein is Interferon regulatory factor 8 of Homo sapiens (Human).